Consider the following 777-residue polypeptide: DnaJ homolog subfamily C member 16 (777 aa).

The first 23 residues, 1–23 (MELGRAGPAGLLLLLLLLLAAQA), serve as a signal peptide directing secretion. Residues 24-531 (APERDPYRVL…DSLFHSNWRE (508 aa)) are Cytoplasmic-facing. Residues 28-92 (DPYRVLGVGR…EKRANFDRYG (65 aa)) form the J domain. Residues 117 to 243 (FDESFFHFPF…LRQFVENLLP (127 aa)) enclose the Thioredoxin domain. Residues 532 to 552 (MMPLLSLLFSALFILFGTVIV) form a helical; Anchor for type IV membrane protein membrane-spanning segment. Residues 553-777 (QAFSDSSDTR…FYIPSWPALD (225 aa)) are Extracellular-facing. Residues 558 to 589 (SSDTRDSPASEKKDTTAKTEKNDTSFNKESNS) are disordered. Residues 559-580 (SDTRDSPASEKKDTTAKTEKND) show a composition bias toward basic and acidic residues. Asn627 is a glycosylation site (N-linked (GlcNAc...) asparagine).

It localises to the endoplasmic reticulum membrane. Plays an important role in regulating the size of autophagosomes during the formation process. The chain is DnaJ homolog subfamily C member 16 (DNAJC16) from Gallus gallus (Chicken).